The primary structure comprises 332 residues: uncharacterized protein (332 aa).

The chain crosses the membrane as a helical span at residues methionine 185–isoleucine 205.

The protein localises to the host membrane. This is an uncharacterized protein from Sulfolobus islandicus filamentous virus (isolate Iceland/Hveragerdi) (SIFV).